Reading from the N-terminus, the 214-residue chain is LOB domain-containing protein 7 (214 aa).

Positions 12–113 (TACAACKHQR…TELNLTRQQI (102 aa)) constitute an LOB domain.

The protein belongs to the LOB domain-containing protein family.

This is LOB domain-containing protein 7 (LBD7) from Arabidopsis thaliana (Mouse-ear cress).